The chain runs to 59 residues: Large ribosomal subunit protein uL30 (59 aa).

Belongs to the universal ribosomal protein uL30 family. In terms of assembly, part of the 50S ribosomal subunit.

In Enterococcus faecalis (strain ATCC 700802 / V583), this protein is Large ribosomal subunit protein uL30.